Consider the following 343-residue polypeptide: Proto-oncogene serine/threonine-protein kinase mos (343 aa).

One can recognise a Protein kinase domain in the interval Val63–Arg339. Residues Leu69–Val77 and Lys90 each bind ATP. The active-site Proton acceptor is the Asp198.

The protein belongs to the protein kinase superfamily. Ser/Thr protein kinase family. As to quaternary structure, interacts with MAP2K1/MEK1.

It is found in the cytoplasm. The enzyme catalyses L-seryl-[protein] + ATP = O-phospho-L-seryl-[protein] + ADP + H(+). It carries out the reaction L-threonyl-[protein] + ATP = O-phospho-L-threonyl-[protein] + ADP + H(+). Functionally, serine/threonine kinase involved in the regulation of MAPK signaling. Is an activator of the ERK1/2 signaling cascade playing an essential role in the stimulation of oocyte maturation. This Mus musculus (Mouse) protein is Proto-oncogene serine/threonine-protein kinase mos.